Reading from the N-terminus, the 314-residue chain is Epithelial-stromal interaction protein 1 (314 aa).

Disordered regions lie at residues 1–72 (MYTR…PNES), 227–272 (WAGS…RAQI), and 289–314 (QGKS…SWGL). Over residues 18-30 (SRDHAGAGQRREL) the composition is skewed to basic and acidic residues. Phosphoserine is present on S39. Residues 71 to 180 (ESRRQKIQRI…QEDIRRATFR (110 aa)) are a coiled coil. Residues 232-272 (AHRDSPQKEDNPRLQKTRDGHQKNKLLETKGQHQEEERAQI) show a composition bias toward basic and acidic residues. A compositionally biased stretch (polar residues) spans 305 to 314 (NMNSTDSWGL).

Expressed in the spleen, with expression in T cells, B cells, natural killer cells and natural killer T cells and high expression in monocytes and macrophages.

Its function is as follows. Plays a role in M1 macrophage polarization and is required for the proper regulation of gene expression during M1 versus M2 macrophage differentiation. Might play a role in RELA/p65 and STAT1 phosphorylation and nuclear localization upon activation of macrophages. The sequence is that of Epithelial-stromal interaction protein 1 (Epsti1) from Mus musculus (Mouse).